A 437-amino-acid polypeptide reads, in one-letter code: Adenosylmethionine-8-amino-7-oxononanoate aminotransferase (437 aa).

Trp64 is a substrate binding site. 124-125 (GS) provides a ligand contact to pyridoxal 5'-phosphate. Tyr157 is a binding site for substrate. Pyridoxal 5'-phosphate is bound at residue Asp254. Residues Lys283 and Gly316 each coordinate substrate. Lys283 carries the post-translational modification N6-(pyridoxal phosphate)lysine. Position 317-318 (317-318 (PT)) interacts with pyridoxal 5'-phosphate. Substrate is bound at residue Arg400.

It belongs to the class-III pyridoxal-phosphate-dependent aminotransferase family. BioA subfamily. As to quaternary structure, homodimer. Requires pyridoxal 5'-phosphate as cofactor.

Its subcellular location is the cytoplasm. It catalyses the reaction (8S)-8-amino-7-oxononanoate + S-adenosyl-L-methionine = S-adenosyl-4-methylsulfanyl-2-oxobutanoate + (7R,8S)-7,8-diammoniononanoate. It participates in cofactor biosynthesis; biotin biosynthesis; 7,8-diaminononanoate from 8-amino-7-oxononanoate (SAM route): step 1/1. Functionally, catalyzes the transfer of the alpha-amino group from S-adenosyl-L-methionine (SAM) to 7-keto-8-aminopelargonic acid (KAPA) to form 7,8-diaminopelargonic acid (DAPA). It is the only aminotransferase known to utilize SAM as an amino donor. This is Adenosylmethionine-8-amino-7-oxononanoate aminotransferase (bioA) from Mycobacterium tuberculosis (strain CDC 1551 / Oshkosh).